The following is a 470-amino-acid chain: Zinc finger protein weckle (470 aa).

A required for homodimerization region spans residues 1–103; it reads MGVPTSDWIY…DALRLEYGLP (103 aa). Positions 10 to 82 constitute a ZAD domain; sequence YWCRLCARDD…SKVQAIFELL (73 aa). Zn(2+) is bound by residues cysteine 12, cysteine 15, cysteine 55, and cysteine 58. The segment at 156–265 is disordered; it reads NSDPKVLASP…LSMSPHGSQS (110 aa). The residue at position 168 (serine 168) is a Phosphoserine. Residues 195–208 are compositionally biased toward acidic residues; the sequence is ESDDEEAILDEDEA. Over residues 214–225 the composition is skewed to basic residues; the sequence is LKRKRGRPKGSG. Residues 237-254 show a composition bias toward basic and acidic residues; the sequence is TSREPDDNAKSKQDDKTS. Residues 255-265 show a composition bias toward polar residues; that stretch reads ELSMSPHGSQS. 6 C2H2-type zinc fingers span residues 271 to 294, 300 to 322, 328 to 350, 355 to 377, 383 to 405, and 411 to 434; these read YPCK…HDMH, YVCD…QLVH, CICP…SQTH, FECN…KYVH, FKCE…LLGH, and YVCK…WKKH.

In terms of assembly, homodimer. Interacts with Myd88 and Toll.

The protein localises to the cell membrane. In terms of biological role, acts as an adapter to assemble/stabilize a Toll/wek/Myd88/tube complex; required for efficient recruitment of Myd88 to Toll. Dispensable for innate immune response; plays a minimal role, if any, in the immune defense against Gram-positive bacteria and fungi. Involved in dorsoventral axis determination. This Drosophila melanogaster (Fruit fly) protein is Zinc finger protein weckle.